Here is a 546-residue protein sequence, read N- to C-terminus: CTP synthase (546 aa).

The segment at 1-266 (MARYIFITGG…DTEVLDVFGL (266 aa)) is amidoligase domain. Residue serine 13 coordinates CTP. Serine 13 provides a ligand contact to UTP. 14–19 (SLGKGL) provides a ligand contact to ATP. Residue tyrosine 54 coordinates L-glutamine. Aspartate 71 lines the ATP pocket. Residues aspartate 71 and glutamate 140 each coordinate Mg(2+). CTP-binding positions include 147 to 149 (DIE), 187 to 192 (KTKPTQ), and lysine 223. UTP contacts are provided by residues 187-192 (KTKPTQ) and lysine 223. In terms of domain architecture, Glutamine amidotransferase type-1 spans 293 to 545 (NIAIVGKYTG…IGAAKERSRL (253 aa)). Alanine 357 contributes to the L-glutamine binding site. The Nucleophile; for glutamine hydrolysis role is filled by cysteine 384. Residues 385 to 388 (FGMQ), glutamate 408, and arginine 473 each bind L-glutamine. Catalysis depends on residues histidine 518 and glutamate 520.

This sequence belongs to the CTP synthase family. As to quaternary structure, homotetramer.

It catalyses the reaction UTP + L-glutamine + ATP + H2O = CTP + L-glutamate + ADP + phosphate + 2 H(+). It carries out the reaction L-glutamine + H2O = L-glutamate + NH4(+). The enzyme catalyses UTP + NH4(+) + ATP = CTP + ADP + phosphate + 2 H(+). The protein operates within pyrimidine metabolism; CTP biosynthesis via de novo pathway; CTP from UDP: step 2/2. With respect to regulation, allosterically activated by GTP, when glutamine is the substrate; GTP has no effect on the reaction when ammonia is the substrate. The allosteric effector GTP functions by stabilizing the protein conformation that binds the tetrahedral intermediate(s) formed during glutamine hydrolysis. Inhibited by the product CTP, via allosteric rather than competitive inhibition. In terms of biological role, catalyzes the ATP-dependent amination of UTP to CTP with either L-glutamine or ammonia as the source of nitrogen. Regulates intracellular CTP levels through interactions with the four ribonucleotide triphosphates. The sequence is that of CTP synthase from Phenylobacterium zucineum (strain HLK1).